Consider the following 638-residue polypeptide: 1-deoxy-D-xylulose-5-phosphate synthase (638 aa).

Residues His79 and 120–122 (GHS) each bind thiamine diphosphate. Asp151 provides a ligand contact to Mg(2+). Thiamine diphosphate contacts are provided by residues 152–153 (GA), Asn182, Tyr291, and Glu373. Asn182 lines the Mg(2+) pocket.

This sequence belongs to the transketolase family. DXPS subfamily. As to quaternary structure, homodimer. It depends on Mg(2+) as a cofactor. Thiamine diphosphate is required as a cofactor.

It carries out the reaction D-glyceraldehyde 3-phosphate + pyruvate + H(+) = 1-deoxy-D-xylulose 5-phosphate + CO2. Its pathway is metabolic intermediate biosynthesis; 1-deoxy-D-xylulose 5-phosphate biosynthesis; 1-deoxy-D-xylulose 5-phosphate from D-glyceraldehyde 3-phosphate and pyruvate: step 1/1. Functionally, catalyzes the acyloin condensation reaction between C atoms 2 and 3 of pyruvate and glyceraldehyde 3-phosphate to yield 1-deoxy-D-xylulose-5-phosphate (DXP). The polypeptide is 1-deoxy-D-xylulose-5-phosphate synthase (Xanthomonas campestris pv. campestris (strain 8004)).